Here is a 124-residue protein sequence, read N- to C-terminus: Ribulose bisphosphate carboxylase small subunit (124 aa).

The protein belongs to the RuBisCO small chain family. Heterohexadecamer of 8 large and 8 small subunits.

In terms of biological role, ruBisCO catalyzes two reactions: the carboxylation of D-ribulose 1,5-bisphosphate, the primary event in carbon dioxide fixation, as well as the oxidative fragmentation of the pentose substrate. Both reactions occur simultaneously and in competition at the same active site. Although the small subunit is not catalytic it is essential for maximal activity. The sequence is that of Ribulose bisphosphate carboxylase small subunit from Hydrogenophilus thermoluteolus (Pseudomonas hydrogenothermophila).